A 304-amino-acid chain; its full sequence is Coenzyme PQQ synthesis protein B (304 aa).

It belongs to the PqqB family.

It functions in the pathway cofactor biosynthesis; pyrroloquinoline quinone biosynthesis. May be involved in the transport of PQQ or its precursor to the periplasm. The chain is Coenzyme PQQ synthesis protein B from Pseudomonas aeruginosa (strain UCBPP-PA14).